A 190-amino-acid polypeptide reads, in one-letter code: dCTP deaminase (190 aa).

Position 113 to 118 (113 to 118) interacts with dCTP; sequence KSTYAR. The Proton donor/acceptor role is filled by Glu-139. 4 residues coordinate dCTP: Gln-158, Tyr-172, Lys-181, and Gln-182.

This sequence belongs to the dCTP deaminase family. As to quaternary structure, homotrimer.

The catalysed reaction is dCTP + H2O + H(+) = dUTP + NH4(+). It functions in the pathway pyrimidine metabolism; dUMP biosynthesis; dUMP from dCTP (dUTP route): step 1/2. In terms of biological role, catalyzes the deamination of dCTP to dUTP. The sequence is that of dCTP deaminase from Chlamydia trachomatis serovar L2 (strain ATCC VR-902B / DSM 19102 / 434/Bu).